Here is a 214-residue protein sequence, read N- to C-terminus: MESENMDSENMKTENMESQNVDFESVSSVTALEALSKLLNPEEEDDSDYGQTNGLSTIGAMGPGNIGPPQIEELKVIPETSEENNEDIWNSEEIPEGAEYDDMWDVREIPEYEIIFRQQVGTEDIFLGLSKKDSSTGCCSELVAKIKLPNTNPSDIQIDIQETILDLRTPQKKLLITLPELVECTSAKAFYIPETETLEITMTMKRELDIANFF.

Disordered regions lie at residues 1–22 (MESE…QNVD) and 34–68 (ALSK…NIGP).

This sequence belongs to the PIH1 family. Interacts with HSPA1A/B and HSP90AA1. Interacts with DNAAF2 and DNAAF4. Interacts wuth DNAI2. As to expression, expressed in testis, small intestine, prostate, adrenal gland, spleen, lung, bladder, breast and ovary. Expressed in ciliated epithelial cells.

The protein localises to the cytoplasm. It is found in the golgi apparatus. It localises to the trans-Golgi network. In terms of biological role, plays a role in cytoplasmic pre-assembly of axonemal dynein. This is Dynein axonemal assembly factor 6 from Homo sapiens (Human).